Reading from the N-terminus, the 293-residue chain is 4-hydroxy-tetrahydrodipicolinate synthase (293 aa).

A pyruvate-binding site is contributed by Thr-45. Catalysis depends on Tyr-133, which acts as the Proton donor/acceptor. Lys-161 acts as the Schiff-base intermediate with substrate in catalysis. Ile-203 provides a ligand contact to pyruvate.

This sequence belongs to the DapA family. Homotetramer; dimer of dimers.

Its subcellular location is the cytoplasm. It catalyses the reaction L-aspartate 4-semialdehyde + pyruvate = (2S,4S)-4-hydroxy-2,3,4,5-tetrahydrodipicolinate + H2O + H(+). The protein operates within amino-acid biosynthesis; L-lysine biosynthesis via DAP pathway; (S)-tetrahydrodipicolinate from L-aspartate: step 3/4. Functionally, catalyzes the condensation of (S)-aspartate-beta-semialdehyde [(S)-ASA] and pyruvate to 4-hydroxy-tetrahydrodipicolinate (HTPA). In Aliivibrio salmonicida (strain LFI1238) (Vibrio salmonicida (strain LFI1238)), this protein is 4-hydroxy-tetrahydrodipicolinate synthase.